Reading from the N-terminus, the 69-residue chain is Cytochrome c oxidase subunit 8A, mitochondrial (69 aa).

A mitochondrion-targeting transit peptide spans 1 to 25 (MSVLTSLLLRGLTGSARRLPVPRAK). At 26–36 (VHSMPPEEELG) the chain is on the mitochondrial matrix side. Residues 37 to 60 (IMEKAIGLTFCFVSLFLPAGWILS) form a helical membrane-spanning segment. Topologically, residues 61–69 (HLEDYKRPE) are mitochondrial intermembrane.

Belongs to the cytochrome c oxidase VIII family. As to quaternary structure, component of the cytochrome c oxidase (complex IV, CIV), a multisubunit enzyme composed of 14 subunits. The complex is composed of a catalytic core of 3 subunits MT-CO1, MT-CO2 and MT-CO3, encoded in the mitochondrial DNA, and 11 supernumerary subunits COX4I, COX5A, COX5B, COX6A, COX6B, COX6C, COX7A, COX7B, COX7C, COX8 and NDUFA4, which are encoded in the nuclear genome. The complex exists as a monomer or a dimer and forms supercomplexes (SCs) in the inner mitochondrial membrane with NADH-ubiquinone oxidoreductase (complex I, CI) and ubiquinol-cytochrome c oxidoreductase (cytochrome b-c1 complex, complex III, CIII), resulting in different assemblies (supercomplex SCI(1)III(2)IV(1) and megacomplex MCI(2)III(2)IV(2)). Post-translationally, in response to mitochondrial stress, the precursor protein is ubiquitinated by the SIFI complex in the cytoplasm before mitochondrial import, leading to its degradation. Within the SIFI complex, UBR4 initiates ubiquitin chain that are further elongated or branched by KCMF1.

Its subcellular location is the mitochondrion inner membrane. It participates in energy metabolism; oxidative phosphorylation. Functionally, component of the cytochrome c oxidase, the last enzyme in the mitochondrial electron transport chain which drives oxidative phosphorylation. The respiratory chain contains 3 multisubunit complexes succinate dehydrogenase (complex II, CII), ubiquinol-cytochrome c oxidoreductase (cytochrome b-c1 complex, complex III, CIII) and cytochrome c oxidase (complex IV, CIV), that cooperate to transfer electrons derived from NADH and succinate to molecular oxygen, creating an electrochemical gradient over the inner membrane that drives transmembrane transport and the ATP synthase. Cytochrome c oxidase is the component of the respiratory chain that catalyzes the reduction of oxygen to water. Electrons originating from reduced cytochrome c in the intermembrane space (IMS) are transferred via the dinuclear copper A center (CU(A)) of subunit 2 and heme A of subunit 1 to the active site in subunit 1, a binuclear center (BNC) formed by heme A3 and copper B (CU(B)). The BNC reduces molecular oxygen to 2 water molecules using 4 electrons from cytochrome c in the IMS and 4 protons from the mitochondrial matrix. The chain is Cytochrome c oxidase subunit 8A, mitochondrial (COX8A) from Macaca fascicularis (Crab-eating macaque).